The sequence spans 304 residues: tRNA pseudouridine synthase B (304 aa).

Residue Asp47 is the Nucleophile of the active site. The tract at residues 85–105 (TNTDDGEGEVTETSDARPSDD) is disordered.

Belongs to the pseudouridine synthase TruB family. Type 1 subfamily.

It carries out the reaction uridine(55) in tRNA = pseudouridine(55) in tRNA. Functionally, responsible for synthesis of pseudouridine from uracil-55 in the psi GC loop of transfer RNAs. In Dinoroseobacter shibae (strain DSM 16493 / NCIMB 14021 / DFL 12), this protein is tRNA pseudouridine synthase B.